Consider the following 453-residue polypeptide: MLLTLRVQGARHWLKSTRCLASSAAPAKSPSSPPQLEVSGSTYATDGWTNVTPKILSYVGANKHLQTDHPLSIIRQRIVNYFYGAYRNQRGNPLFSVYDQMNPVVTVQQNFDNLLIPADHVSRQKSDCYYINQQHLLRAHTTAHQVELISGGLDNFLVVGEVYRRDEIDSTHYPVFHQADAVRLVTKDKLFERNPGLELFEETWSGTLADPKLILPSSKFMDQTKQPCHTLEAVKLMEHEMKHVLVGLTKDLFGPRIKYRWVDTYFPFTQPSWELEIYFKDNWLEVLGCGIMRHEILQRSGVHQSIGYAFGVGLERLAMVLFDIPDIRLFWSNDSGFLSQFSEKDLHNLPKYKPISHYPQCTNDLSFWLPQDIEVDAGFSPNDFYDLVRSVAGDMVEQISLVDKFKHPKTGKSSVCFRIVYRHMERTLTQAEVNEIHKQIASASVDSFNVQIR.

Residues 1–27 (MLLTLRVQGARHWLKSTRCLASSAAPA) constitute a mitochondrion transit peptide. Substrate-binding positions include 142–145 (TAHQ), arginine 164, 171–173 (THY), 178–180 (QAD), glutamate 285, and phenylalanine 310. Positions 356–453 (SHYPQCTNDL…SVDSFNVQIR (98 aa)) constitute an FDX-ACB domain.

Belongs to the class-II aminoacyl-tRNA synthetase family.

It localises to the mitochondrion matrix. The catalysed reaction is tRNA(Phe) + L-phenylalanine + ATP = L-phenylalanyl-tRNA(Phe) + AMP + diphosphate + H(+). Functionally, is responsible for the charging of tRNA(Phe) with phenylalanine in mitochondrial translation. This is Probable phenylalanine--tRNA ligase, mitochondrial from Drosophila melanogaster (Fruit fly).